The primary structure comprises 536 residues: Lysosomal acid glucosylceramidase (536 aa).

The first 39 residues, 1–39, serve as a signal peptide directing secretion; sequence MEFSSPSREECPKPLSRVSIMAGSLTGLLLLQAVSWASG. 2 disulfides stabilise this stretch: C43-C55 and C57-C62. N-linked (GlcNAc...) asparagine glycosylation is found at N58, N98, and N185. The active-site Proton donor is E274. The N-linked (GlcNAc...) asparagine glycan is linked to N309. The active-site Nucleophile is the E379. An N-linked (GlcNAc...) asparagine glycan is attached at N501.

It belongs to the glycosyl hydrolase 30 family. Interacts with saposin-C. Interacts with SCARB2. Interacts with TCP1. May interacts with SNCA; this interaction may inhibit the glucosylceramidase activity. Interacts with GRN; this interaction prevents aggregation of GBA1-SCARB2 complex via interaction with HSPA1A upon stress.

It is found in the lysosome membrane. It carries out the reaction a beta-D-glucosyl-(1&lt;-&gt;1')-N-acylsphing-4-enine + H2O = an N-acylsphing-4-enine + D-glucose. It catalyses the reaction a beta-D-galactosyl-(1&lt;-&gt;1')-N-acylsphing-4-enine + H2O = an N-acylsphing-4-enine + D-galactose. The enzyme catalyses cholesteryl 3-beta-D-glucoside + H2O = cholesterol + D-glucose. The catalysed reaction is a beta-D-glucosyl-(1&lt;-&gt;1')-N-acylsphing-4-enine + cholesterol = cholesteryl 3-beta-D-glucoside + an N-acylsphing-4-enine. It carries out the reaction beta-D-glucosyl-N-(9Z-octadecenoyl)-sphing-4E-enine + cholesterol = N-(9Z-octadecenoyl)-sphing-4-enine + cholesteryl 3-beta-D-glucoside. It catalyses the reaction beta-D-glucosyl-(1&lt;-&gt;1')-N-hexadecanoylsphing-4-enine + cholesterol = cholesteryl 3-beta-D-glucoside + N-hexadecanoylsphing-4-enine. The enzyme catalyses beta-D-glucosyl-N-octanoylsphing-4E-enine + cholesterol = N-octanoylsphing-4-enine + cholesteryl 3-beta-D-glucoside. The catalysed reaction is beta-D-glucosyl-N-dodecanoylsphing-4-enine + cholesterol = N-dodecanoylsphing-4-enine + cholesteryl 3-beta-D-glucoside. It carries out the reaction beta-D-glucosyl-(1&lt;-&gt;1)-N-octadecanoylsphing-4-enine + cholesterol = N-octadecanoylsphing-4-enine + cholesteryl 3-beta-D-glucoside. It catalyses the reaction beta-D-glucosyl-(1&lt;-&gt;1')-N-(15Z-tetracosenoyl)-sphing-4-enine + cholesterol = N-(15Z-tetracosenoyl)-sphing-4-enine + cholesteryl 3-beta-D-glucoside. The enzyme catalyses a beta-D-galactosyl-(1&lt;-&gt;1')-N-acylsphing-4-enine + cholesterol = cholesteryl 3-beta-D-galactoside + an N-acylsphing-4-enine. The catalysed reaction is 1-(beta-D-galactosyl)-N-dodecanoylsphing-4-enine + cholesterol = cholesteryl 3-beta-D-galactoside + N-dodecanoylsphing-4-enine. It carries out the reaction a beta-D-xylosyl-(1&lt;-&gt;1')-N-acylsphing-4-enine + cholesterol = cholesteryl 3-beta-D-xyloside + an N-acylsphing-4-enine. It catalyses the reaction beta-D-xylosyl-(1&lt;-&gt;1')-N-(9Z-octadecenoyl)-sphing-4-enine + cholesterol = cholesteryl 3-beta-D-xyloside + N-(9Z-octadecenoyl)-sphing-4-enine. The protein operates within steroid metabolism; cholesterol metabolism. It functions in the pathway sphingolipid metabolism. Synergistically activated by saposin-A and saposin-C, two saposin peptides produced by proteolytic processing of prosaposin/PSAP. Saposin-C activates GBA1 through its recruitment to membranes. The membrane structure and composition in anionic phospholipids are also important for the activation. Activated by PKC in the salvage pathway of ceramide formation. Inhibited by conduritol B epoxide/CBE. Functionally, glucosylceramidase that catalyzes, within the lysosomal compartment, the hydrolysis of glucosylceramides/GlcCers (such as beta-D-glucosyl-(1&lt;-&gt;1')-N-acylsphing-4-enine) into free ceramides (such as N-acylsphing-4-enine) and glucose. Plays a central role in the degradation of complex lipids and the turnover of cellular membranes. Through the production of ceramides, participates in the PKC-activated salvage pathway of ceramide formation. Catalyzes the glucosylation of cholesterol, through a transglucosylation reaction where glucose is transferred from GlcCer to cholesterol. GlcCer containing mono-unsaturated fatty acids (such as beta-D-glucosyl-N-(9Z-octadecenoyl)-sphing-4-enine) are preferred as glucose donors for cholesterol glucosylation when compared with GlcCer containing same chain length of saturated fatty acids (such as beta-D-glucosyl-N-octadecanoyl-sphing-4-enine). Under specific conditions, may alternatively catalyze the reverse reaction, transferring glucose from cholesteryl 3-beta-D-glucoside to ceramide. Can also hydrolyze cholesteryl 3-beta-D-glucoside producing glucose and cholesterol. Catalyzes the hydrolysis of galactosylceramides/GalCers (such as beta-D-galactosyl-(1&lt;-&gt;1')-N-acylsphing-4-enine), as well as the transfer of galactose between GalCers and cholesterol in vitro, but with lower activity than with GlcCers. Contrary to GlcCer and GalCer, xylosylceramide/XylCer (such as beta-D-xyosyl-(1&lt;-&gt;1')-N-acylsphing-4-enine) is not a good substrate for hydrolysis, however it is a good xylose donor for transxylosylation activity to form cholesteryl 3-beta-D-xyloside. The protein is Lysosomal acid glucosylceramidase of Homo sapiens (Human).